Here is a 205-residue protein sequence, read N- to C-terminus: Holliday junction branch migration complex subunit RuvA (205 aa).

The domain I stretch occupies residues 1–64 (MIGRLRGIIL…EDAQLLYGFN (64 aa)). The interval 65–143 (DKQERALFRE…GLNGDLFNNT (79 aa)) is domain II. Residues 144 to 156 (GDIQLPASNSSQI) are flexible linker. Residues 157–205 (SDADIEAEAASALVALGYKPQEASRLVSKIAKPGADCETLIRDALRAAL) are domain III.

Belongs to the RuvA family. As to quaternary structure, homotetramer. Forms an RuvA(8)-RuvB(12)-Holliday junction (HJ) complex. HJ DNA is sandwiched between 2 RuvA tetramers; dsDNA enters through RuvA and exits via RuvB. An RuvB hexamer assembles on each DNA strand where it exits the tetramer. Each RuvB hexamer is contacted by two RuvA subunits (via domain III) on 2 adjacent RuvB subunits; this complex drives branch migration. In the full resolvosome a probable DNA-RuvA(4)-RuvB(12)-RuvC(2) complex forms which resolves the HJ.

It localises to the cytoplasm. Functionally, the RuvA-RuvB-RuvC complex processes Holliday junction (HJ) DNA during genetic recombination and DNA repair, while the RuvA-RuvB complex plays an important role in the rescue of blocked DNA replication forks via replication fork reversal (RFR). RuvA specifically binds to HJ cruciform DNA, conferring on it an open structure. The RuvB hexamer acts as an ATP-dependent pump, pulling dsDNA into and through the RuvAB complex. HJ branch migration allows RuvC to scan DNA until it finds its consensus sequence, where it cleaves and resolves the cruciform DNA. The sequence is that of Holliday junction branch migration complex subunit RuvA from Yersinia enterocolitica serotype O:8 / biotype 1B (strain NCTC 13174 / 8081).